The following is a 543-amino-acid chain: Ribonuclease Y (543 aa).

The chain crosses the membrane as a helical span at residues 4–24; the sequence is IIMIPVATAIVSLLVGTVTGY. The region spanning 233–296 is the KH domain; that stretch reads TVSVVDLPNE…EIAKRAMERL (64 aa). The HD domain maps to 359 to 452; that stretch reads VLSHSIEVGK…VVAADTISSA (94 aa).

This sequence belongs to the RNase Y family.

The protein resides in the cell membrane. Functionally, endoribonuclease that initiates mRNA decay. This chain is Ribonuclease Y, found in Lactobacillus acidophilus (strain ATCC 700396 / NCK56 / N2 / NCFM).